Reading from the N-terminus, the 235-residue chain is C-type lectin domain family 2 member D-related protein (235 aa).

Residues 1–50 (MPSSAHLQDPPPHLSRTLTQDEEQTSLRQSSSCGPSTTSASASESLSGST) form a disordered region. Residues 1–75 (MPSSAHLQDP…KIIPTESAAK (75 aa)) lie on the Cytoplasmic side of the membrane. Residues 30–50 (SSSCGPSTTSASASESLSGST) are compositionally biased toward low complexity. A helical; Signal-anchor for type II membrane protein transmembrane segment spans residues 76–96 (LLCCYAVFMALTVVVIALSIA). The Extracellular segment spans residues 97–235 (LSVKKTPQIS…KLNSYTSQCP (139 aa)). One can recognise a C-type lectin domain in the interval 121-232 (FGNKCYYFNE…ICSKLNSYTS (112 aa)). Asn-134 is a glycosylation site (N-linked (GlcNAc...) asparagine).

It localises to the cell membrane. Functionally, lectin-type cell surface receptor. This is C-type lectin domain family 2 member D-related protein from Rattus norvegicus (Rat).